The sequence spans 591 residues: L-fucose isomerase (591 aa).

Catalysis depends on proton acceptor residues Glu337 and Asp361. Positions 337, 361, and 528 each coordinate Mn(2+).

This sequence belongs to the L-fucose isomerase family. Homohexamer. Requires Mn(2+) as cofactor.

It localises to the cytoplasm. It catalyses the reaction L-fucose = L-fuculose. It functions in the pathway carbohydrate degradation; L-fucose degradation; L-lactaldehyde and glycerone phosphate from L-fucose: step 1/3. In terms of biological role, converts the aldose L-fucose into the corresponding ketose L-fuculose. This chain is L-fucose isomerase, found in Escherichia coli O139:H28 (strain E24377A / ETEC).